Here is a 204-residue protein sequence, read N- to C-terminus: Peptide deformylase (204 aa).

2 residues coordinate Fe cation: cysteine 131 and histidine 174. Glutamate 175 is a catalytic residue. Residue histidine 178 participates in Fe cation binding.

The protein belongs to the polypeptide deformylase family. It depends on Fe(2+) as a cofactor.

The enzyme catalyses N-terminal N-formyl-L-methionyl-[peptide] + H2O = N-terminal L-methionyl-[peptide] + formate. Removes the formyl group from the N-terminal Met of newly synthesized proteins. Requires at least a dipeptide for an efficient rate of reaction. N-terminal L-methionine is a prerequisite for activity but the enzyme has broad specificity at other positions. The protein is Peptide deformylase of Streptococcus equi subsp. zooepidemicus (strain H70).